The sequence spans 127 residues: Unclassified hydrophobin 5 (127 aa).

An N-terminal signal peptide occupies residues 1-24 (MFNKQTNAIVLLFTFALFATLAVA). Disulfide bonds link Cys-39/Cys-107, Cys-46/Cys-101, Cys-47/Cys-92, and Cys-108/Cys-121.

It belongs to the fungal hydrophobin family. Self-assembles to form functional amyloid fibrils called rodlets. Self-assembly into fibrillar rodlets occurs spontaneously at hydrophobic:hydrophilic interfaces and the rodlets further associate laterally to form amphipathic monolayers.

It localises to the secreted. It is found in the cell wall. Functionally, aerial growth, conidiation, and dispersal of filamentous fungi in the environment rely upon a capability of their secreting small amphipathic proteins called hydrophobins (HPBs) with low sequence identity. Class I can self-assemble into an outermost layer of rodlet bundles on aerial cell surfaces, conferring cellular hydrophobicity that supports fungal growth, development and dispersal; whereas Class II form highly ordered films at water-air interfaces through intermolecular interactions but contribute nothing to the rodlet structure. This Pleurotus ostreatus (strain PC15) (Oyster mushroom) protein is Unclassified hydrophobin 5.